Consider the following 780-residue polypeptide: Cullin-5 (780 aa).

A Phosphoserine modification is found at S34. A Phosphothreonine modification is found at T210. Residues 711-772 (RILRTQEAII…HKYIRRDESD (62 aa)) enclose the Cullin neddylation domain. A Glycyl lysine isopeptide (Lys-Gly) (interchain with G-Cter in NEDD8) cross-link involves residue K724.

Belongs to the cullin family. Component of multiple cullin-5-RING E3 ubiquitin-protein ligase complexes (ECS complexes, also named CRL5 complexes) formed of CUL5, Elongin BC (ELOB and ELOC), RNF7/RBX2 and a variable SOCS box domain-containing protein as substrate-specific recognition component. CUL5-containing ECS complexes specifically contain RNF7/RBX2, and not RBX1, as catalytic subunit. Component of the ECS(ASB2) complex with the substrate recognition component ASB2. Component of the ECS(ASB6) complex with the substrate recognition component ASB6. Component of the ECS(ASB7) complex with the substrate recognition component ASB7. Component of the ECS(ASB9) complex with the substrate recognition component ASB9. Component of the ECS(ASB11) complex with the substrate recognition component ASB11. Component of the ECS(ASB12) complex with the substrate recognition component ASB12. Component of the ECS(LRRC41) complex with the substrate recognition component LRRC41. Component of the ECS(SOCS1) complex with the substrate recognition component SOCS1. Component of the ECS(SOCS2) complex with the substrate recognition component SOCS2. Component of the ECS(WSB1) complex with the substrate recognition subunit WSB1. Component of the ECS(SOCS3) complex with the substrate recognition component SOCS3. Component of the ECS(SOCS7) complex with the substrate recognition component SOCS7. Component of the ECS(SPSB1) complex with the substrate recognition component SPSB1. Component of the ECS(SPSB3) complex with the substrate recognition component SPSB3. Component of the ECS(SPSB2) complex with the substrate recognition component SPSB2. Component of the ECS(SPSB4) complex with the substrate recognition component SPSB4. Component of the ECS(RAB40) complex with the substrate recognition subunit RAB40A, RAB40B or RAB40C. Component of the ECS(KLHDC1) complex with the substrate recognition component KLHDC1. Component of the ECS(PCMTD1) complex with the substrate recognition subunit PCMTD1. May also form complexes containing RBX1 and ELOA or VHL; additional evidence is however required to confirm this result in vivo. Interacts (when neddylated) with ARIH2; leading to activate the E3 ligase activity of ARIH2. Interacts with ERCC6; the interaction is induced by DNA damaging agents or inhibitors of RNA polymerase II elongation. Interacts with ELOA (via the BC-box). Interacts (unneddylated form) with DCUN1D1, DCUN1D2, DCUN1D3, DCUN1D4 and DCUN1D5; these interactions promote the cullin neddylation. In terms of assembly, (Microbial infection) Interacts (via the substrate recognition component) with HIV-1 Vif; forming an active cullin-5-RING E3 ubiquitin-protein ligase complex (ECS complex). As to quaternary structure, (Microbial infection) Interacts (via the substrate recognition component) with human adenovirus 5 proteins E1B-55K and E4-orf6. (Microbial infection) Interacts with herpes virus 8 protein LANA1; this interaction promotes the degradation of NF-kappa-B component RELA. In terms of assembly, (Microbial infection) Interacts with molluscum contagiosum virus protein MC132; this interaction promotes the degradation of NF-kappa-B component RELA. In terms of processing, neddylated; which enhances the ubiquitination activity of ECS complexes and prevents binding of the inhibitor CAND1. Deneddylated via its interaction with the COP9 signalosome (CSN).

It localises to the nucleus. It participates in protein modification; protein ubiquitination. Functionally, core component of multiple cullin-5-RING E3 ubiquitin-protein ligase complexes (ECS complexes, also named CRL5 complexes), which mediate the ubiquitination and subsequent proteasomal degradation of target proteins. Acts a scaffold protein that contributes to catalysis through positioning of the substrate and the ubiquitin-conjugating enzyme. The functional specificity of the E3 ubiquitin-protein ligase complex depends on the variable SOCS box-containing substrate recognition component. Acts as a key regulator of neuron positioning during cortex development: component of various SOCS-containing ECS complexes, such as the ECS(SOCS7) complex, that regulate reelin signaling by mediating ubiquitination and degradation of DAB1. ECS(SOCS1) seems to direct ubiquitination of JAK2. The ECS(SOCS2) complex mediates the ubiquitination and subsequent proteasomal degradation of phosphorylated EPOR and GHR. The ECS(SPSB3) complex catalyzes ubiquitination of nuclear CGAS. ECS(KLHDC1) complex is part of the DesCEND (destruction via C-end degrons) pathway and mediates ubiquitination and degradation of truncated SELENOS selenoprotein produced by failed UGA/Sec decoding, which ends with a glycine. The ECS(ASB9) complex mediates ubiquitination and degradation of CKB. As part of some ECS complex, promotes 'Lys-11'-linked ubiquitination and degradation of BTRC. As part of a multisubunit ECS complex, polyubiquitinates monoubiquitinated POLR2A. As part of the ECS(RAB40C) complex, mediates ANKRD28 ubiquitination and degradation, thereby inhibiting protein phosphatase 6 (PP6) complex activity and focal adhesion assembly during cell migration. As part of the ECS(RAB40A) complex, mediates RHOU 'Lys-48'-linked ubiquitination and degradation, thus inhibiting focal adhesion disassembly during cell migration. As part of the ECS(RAB40B) complex, mediates LIMA1/EPLIN and RAP2 ubiquitination, thereby regulating actin cytoskeleton dynamics and stress fiber formation during cell migration. May form a cell surface vasopressin receptor. Its function is as follows. (Microbial infection) Following infection by HIV-1 virus, CUL5 associates with HIV-1 Vif proteins and forms a cullin-5-RING E3 ubiquitin-protein ligase complex (ECS complex) that catalyzes ubiquitination and degradation of APOBEC3F and APOBEC3G. The complex can also ubiquitinate APOBEC3H to some extent. In terms of biological role, (Microbial infection) Seems to be involved in proteasomal degradation of p53/TP53 stimulated by adenovirus E1B-55 kDa protein. The protein is Cullin-5 of Homo sapiens (Human).